The chain runs to 340 residues: Alcohol dehydrogenase (340 aa).

Zn(2+) contacts are provided by C37, H58, C89, C92, C95, C103, and C145.

The protein belongs to the zinc-containing alcohol dehydrogenase family. The cofactor is Zn(2+).

The catalysed reaction is a primary alcohol + NAD(+) = an aldehyde + NADH + H(+). It catalyses the reaction a secondary alcohol + NAD(+) = a ketone + NADH + H(+). This is Alcohol dehydrogenase (adh) from Staphylococcus epidermidis (strain ATCC 35984 / DSM 28319 / BCRC 17069 / CCUG 31568 / BM 3577 / RP62A).